We begin with the raw amino-acid sequence, 63 residues long: Small ribosomal subunit protein eS17 (63 aa).

It belongs to the eukaryotic ribosomal protein eS17 family.

The protein is Small ribosomal subunit protein eS17 of Methanococcus maripaludis (strain C7 / ATCC BAA-1331).